The following is a 256-amino-acid chain: MIPSDVSFNVLESWCGTMERIVIGETRINLRTELRNHGLSGFVLGERMKLMDYIRRNPEFLTSLEPIVVSEGPLIVRMMSRASRKAEVGPMASVAGTISQLSLMHLMGKGSRCSIIDNGGDIALVNNRKITVGLYAGSSSLSGTVGFLLKPGGPRGVCTSSGTVGHSISFGRADSVTVFASEASTADALATSIANSANGPDDISAVENALERADDFREHFRGVMVVVGEHAGTVGRIPRLVMTDRKAVLGDLWDEV.

The protein belongs to the UPF0280 family.

This is UPF0280 protein MTH_727 from Methanothermobacter thermautotrophicus (strain ATCC 29096 / DSM 1053 / JCM 10044 / NBRC 100330 / Delta H) (Methanobacterium thermoautotrophicum).